The sequence spans 516 residues: GPI mannosyltransferase 4 (516 aa).

Over 1 to 5 (MMRYQ) the chain is Lumenal. The helical transmembrane segment at 6–26 (WWLYLVYAIGLMLCLGPSYIH) threads the bilayer. Over 27–60 (PDEHFQCIEILAMQFMKVKGTIPWEFKSKFAARS) the chain is Cytoplasmic. A helical transmembrane segment spans residues 61–81 (YGPLLLVYGPLFTILESFPEI). At 82–175 (QDNPALILYS…IQRSNFKNSV (94 aa)) the chain is on the lumenal side. Residues 176 to 196 (ILGLIFSFGVFNRVTFPAFIF) traverse the membrane as a helical segment. Topologically, residues 197–210 (LPCLILFWKFYRVH) are cytoplasmic. The helical transmembrane segment at 211-231 (WKSFSLLLLSFSFSSCLFVLI) threads the bilayer. Residues 232-270 (DTNIYNNGKGFVITPLNNLKYNLNVQNLQVHGLHPRYTH) are Lumenal-facing. The chain crosses the membrane as a helical span at residues 271 to 291 (LLVNLPQIVGPVLLLAIFSGY). The Cytoplasmic portion of the chain corresponds to 292-295 (KLDK). The chain crosses the membrane as a helical span at residues 296–316 (LSTYAIISGLLFLSFFQHQEL). Residue R317 is a topological domain, lumenal. A helical membrane pass occupies residues 318–338 (FLVPLVPLLVTNLNWTPLSST). Over 339–348 (LVNKKIFKGT) the chain is Cytoplasmic. A helical transmembrane segment spans residues 349–369 (WLLFNIIMAFIMGISHQAGII). At 370-516 (QFLGDYFHFR…GLTVYSIELL (147 aa)) the chain is on the lumenal side. N403 and N452 each carry an N-linked (GlcNAc...) asparagine glycan.

This sequence belongs to the glycosyltransferase 22 family. PIGZ subfamily.

It is found in the endoplasmic reticulum membrane. Its pathway is glycolipid biosynthesis; glycosylphosphatidylinositol-anchor biosynthesis. Functionally, alpha-1,2-mannosyltransferase involved in glycosylphosphatidylinositol-anchor biosynthesis. Transfers a fourth mannose to trimannosyl-GPIs during GPI precursor assembly. The presence of a fourth mannose in GPI is essential in fungi. Involved in plasmid maintenance with SMP2. This Saccharomyces cerevisiae (strain ATCC 204508 / S288c) (Baker's yeast) protein is GPI mannosyltransferase 4 (SMP3).